Here is a 234-residue protein sequence, read N- to C-terminus: Large ribosomal subunit protein uL1 (234 aa).

This sequence belongs to the universal ribosomal protein uL1 family. Part of the 50S ribosomal subunit.

In terms of biological role, binds directly to 23S rRNA. The L1 stalk is quite mobile in the ribosome, and is involved in E site tRNA release. Functionally, protein L1 is also a translational repressor protein, it controls the translation of the L11 operon by binding to its mRNA. The chain is Large ribosomal subunit protein uL1 from Prochlorococcus marinus (strain SARG / CCMP1375 / SS120).